We begin with the raw amino-acid sequence, 151 residues long: FUN14 domain-containing protein 1 (151 aa).

Residues 14–17 (YEVL) carry the YXXL motif. The next 3 helical transmembrane spans lie at 44 to 64 (YSVA…GFLF), 71 to 91 (AATA…GGYI), and 130 to 150 (FIKK…LGLA).

The protein belongs to the FUN14 family.

It localises to the mitochondrion outer membrane. Functionally, acts as an activator of hypoxia-induced mitophagy, an important mechanism for mitochondrial quality control. The protein is FUN14 domain-containing protein 1 (fundc1) of Xenopus tropicalis (Western clawed frog).